A 65-amino-acid chain; its full sequence is Small ribosomal subunit protein bS21 (65 aa).

This sequence belongs to the bacterial ribosomal protein bS21 family.

The polypeptide is Small ribosomal subunit protein bS21 (Geotalea daltonii (strain DSM 22248 / JCM 15807 / FRC-32) (Geobacter daltonii)).